The chain runs to 128 residues: L-ectoine synthase (128 aa).

The protein belongs to the ectoine synthase family.

It carries out the reaction (2S)-4-acetamido-2-aminobutanoate = L-ectoine + H2O. It participates in amine and polyamine biosynthesis; ectoine biosynthesis; L-ectoine from L-aspartate 4-semialdehyde: step 3/3. Catalyzes the circularization of gamma-N-acetyl-alpha,gamma-diaminobutyric acid (ADABA) to ectoine (1,4,5,6-tetrahydro-2-methyl-4-pyrimidine carboxylic acid), which is an excellent osmoprotectant. This chain is L-ectoine synthase, found in Oceanobacillus iheyensis (strain DSM 14371 / CIP 107618 / JCM 11309 / KCTC 3954 / HTE831).